Consider the following 359-residue polypeptide: MVDIIFHYPFLGAMGDHSKKKPGTAMCVGCGSQIHDQFILRVSPDLEWHAACLKCAECSQYLDETCTCFVRDGKTYCKRDYVRLFGIKCAKCQVGFSSSDLVMRARDSVYHIECFRCSVCSRQLLPGDEFSLREHELLCRADHGLLLERAAAGSPRSPGPLPGARGLHLPDAGSGRQPALRPHVHKQTEKTTRVRTVLNEKQLHTLRTCYAANPRPDALMKEQLVEMTGLSPRVIRVWFQNKRCKDKKKSILMKQLQQQQHSDKTSLQGLTGTPLVAGSPIRHENAVQGSAVEVQTYQPPWKALSEFALQSDLDQPAFQQLVSFSESGSLGNSSGSDVTSLSSQLPDTPNSMVPSPVET.

LIM zinc-binding domains lie at 25-86 (AMCV…RLFG) and 87-149 (IKCA…LLER). The disordered stretch occupies residues 151–191 (AAGSPRSPGPLPGARGLHLPDAGSGRQPALRPHVHKQTEKT). A phosphoserine mark is found at Ser-154 and Ser-157. Positions 191 to 250 (TTRVRTVLNEKQLHTLRTCYAANPRPDALMKEQLVEMTGLSPRVIRVWFQNKRCKDKKKS) form a DNA-binding region, homeobox. The tract at residues 272-301 (GTPLVAGSPIRHENAVQGSAVEVQTYQPPW) is LIM-binding domain (LID). Position 279 is a phosphoserine (Ser-279). Residues 326–336 (ESGSLGNSSGS) are compositionally biased toward low complexity. Residues 326–359 (ESGSLGNSSGSDVTSLSSQLPDTPNSMVPSPVET) are disordered. The segment covering 337-359 (DVTSLSSQLPDTPNSMVPSPVET) has biased composition (polar residues).

As to quaternary structure, interacts with LHX4.

The protein localises to the nucleus. In terms of biological role, transcriptional factor that defines subclasses of motoneurons that segregate into columns in the spinal cord and select distinct axon pathways. The protein is Insulin gene enhancer protein ISL-2 (ISL2) of Homo sapiens (Human).